A 540-amino-acid chain; its full sequence is Chaperonin GroEL 2 (540 aa).

ATP contacts are provided by residues 29–32, 86–90, Gly413, 476–478, and Asp492; these read TLGP, DGTTT, and NAA.

The protein belongs to the chaperonin (HSP60) family. As to quaternary structure, forms a cylinder of 14 subunits composed of two heptameric rings stacked back-to-back. Interacts with the co-chaperonin GroES.

Its subcellular location is the cytoplasm. The catalysed reaction is ATP + H2O + a folded polypeptide = ADP + phosphate + an unfolded polypeptide.. Together with its co-chaperonin GroES, plays an essential role in assisting protein folding. The GroEL-GroES system forms a nano-cage that allows encapsulation of the non-native substrate proteins and provides a physical environment optimized to promote and accelerate protein folding. The polypeptide is Chaperonin GroEL 2 (Streptomyces albus G).